The chain runs to 203 residues: Holliday junction branch migration complex subunit RuvA (203 aa).

Residues 1–63 (MIGKLSGKID…EEHIHLYGFL (63 aa)) form a domain I region. The interval 64 to 142 (TIEEKNFFNL…KISTGAAIIN (79 aa)) is domain II. The flexible linker stretch occupies residues 143–149 (DSLNIKN). The interval 150–203 (ITSVASNEVIKALVNLGFSRFEAQNSVQGIVIQNPEISIDELIKTALKNRNAGL) is domain III.

It belongs to the RuvA family. Homotetramer. Forms an RuvA(8)-RuvB(12)-Holliday junction (HJ) complex. HJ DNA is sandwiched between 2 RuvA tetramers; dsDNA enters through RuvA and exits via RuvB. An RuvB hexamer assembles on each DNA strand where it exits the tetramer. Each RuvB hexamer is contacted by two RuvA subunits (via domain III) on 2 adjacent RuvB subunits; this complex drives branch migration. In the full resolvosome a probable DNA-RuvA(4)-RuvB(12)-RuvC(2) complex forms which resolves the HJ.

The protein localises to the cytoplasm. Its function is as follows. The RuvA-RuvB-RuvC complex processes Holliday junction (HJ) DNA during genetic recombination and DNA repair, while the RuvA-RuvB complex plays an important role in the rescue of blocked DNA replication forks via replication fork reversal (RFR). RuvA specifically binds to HJ cruciform DNA, conferring on it an open structure. The RuvB hexamer acts as an ATP-dependent pump, pulling dsDNA into and through the RuvAB complex. HJ branch migration allows RuvC to scan DNA until it finds its consensus sequence, where it cleaves and resolves the cruciform DNA. The polypeptide is Holliday junction branch migration complex subunit RuvA (Rickettsia akari (strain Hartford)).